We begin with the raw amino-acid sequence, 60 residues long: Putative SERF-like protein (60 aa).

Over residues 1–53 (MTRGNQRDLARQKNQKKQADLTKGKRTDNLTVEQRKARDAELMREKQKKKEEA) the composition is skewed to basic and acidic residues. Residues 1–60 (MTRGNQRDLARQKNQKKQADLTKGKRTDNLTVEQRKARDAELMREKQKKKEEAAAAGTSK) form a disordered region.

Belongs to the SERF family.

The chain is Putative SERF-like protein from Drosophila melanogaster (Fruit fly).